The primary structure comprises 152 residues: Ribosome maturation factor RimP (152 aa).

It belongs to the RimP family.

It is found in the cytoplasm. Functionally, required for maturation of 30S ribosomal subunits. This chain is Ribosome maturation factor RimP, found in Fervidobacterium nodosum (strain ATCC 35602 / DSM 5306 / Rt17-B1).